Here is a 38-residue protein sequence, read N- to C-terminus: Photosystem II reaction center protein L (38 aa).

A helical transmembrane segment spans residues 17-37 (SLYWGLLLIFVLAILFSNYFF).

The protein belongs to the PsbL family. PSII is composed of 1 copy each of membrane proteins PsbA, PsbB, PsbC, PsbD, PsbE, PsbF, PsbH, PsbI, PsbJ, PsbK, PsbL, PsbM, PsbT, PsbX, PsbY, PsbZ, Psb30/Ycf12, at least 3 peripheral proteins of the oxygen-evolving complex and a large number of cofactors. It forms dimeric complexes.

Its subcellular location is the plastid. The protein resides in the chloroplast thylakoid membrane. One of the components of the core complex of photosystem II (PSII). PSII is a light-driven water:plastoquinone oxidoreductase that uses light energy to abstract electrons from H(2)O, generating O(2) and a proton gradient subsequently used for ATP formation. It consists of a core antenna complex that captures photons, and an electron transfer chain that converts photonic excitation into a charge separation. This subunit is found at the monomer-monomer interface and is required for correct PSII assembly and/or dimerization. The protein is Photosystem II reaction center protein L of Aethionema cordifolium (Lebanon stonecress).